Reading from the N-terminus, the 805-residue chain is MGLPALEFSDSFLDSPDFRERLKCHEIELDRTNKFIKELIKDGNMLISALKSLSAAVQKFSQSLQDFQFECIGDAETDDEINIAQSFKEFSQLLNTVEEERRRLIQNADDVLITPLEKFRKEQIGAAKEGKKKFDKETEKYYTVLEKHLSLSSRKKESLLQEADTQISKERQVFYDASLEYVFKIQEVQERKKFEFVEPLLAFLQGLFTFYHEGYELAHEFEPYKQQLQFNLQNTRNNFESTRQEVENLMRRIRSAEQDFKAPGQWTMEGFLYVQEKRPLGCTWTRHYCTYEKGTKMFTMSNSELKTGGKQNGLIMSPPEMFKLKSCIRRRTDSIDKRFCFDIEVVERHGIITLQSLSESNRRLWMEAMDGKEPIYTLPALLSKKEETFLNEAGFNFVRKCIESVEARGINTLGLYRIGGVNSKVQRLMTSVFAAKAPADLDLDPDTWDNKTITSGLKNYLRCLAEPLMTYRLHKDFIMAVKSDDQNYRVCAVHALVYKLPDKNKEMLNLLIKHLHVVSTHSQKNLMTVSNLGVIFGPTLMRSQEETVAAMMNIKFQNIVVEILIENYDKIFHQAPDPNVPLPHPQSHSQSRGGARRSKAICLSSGSRKSRGLYPPALCLADADSDTFSSSPSSTPMGSMESLSSHSSEQNSCSKTGSPSRNKHKASGSLCWTTPSPSTNGPKSPACTTSPDSSSKEDANKTDGEWEEALSTSPGDRSSPASELLHRTLGETAEDQRSLSSCSSLTSLHISEGFRSCHGSIQSLVSRSQRDSLKSLHMPDLPPKDGMRFRDDSSASNGYQRPGSV.

Residues 7-262 enclose the BAR domain; sequence EFSDSFLDSP…IRSAEQDFKA (256 aa). A coiled-coil region spans residues 225-262; it reads KQQLQFNLQNTRNNFESTRQEVENLMRRIRSAEQDFKA. Residues 265–374 enclose the PH domain; that stretch reads QWTMEGFLYV…WMEAMDGKEP (110 aa). Residues 376–572 enclose the Rho-GAP domain; sequence YTLPALLSKK…ILIENYDKIF (197 aa). 3 disordered regions span residues 576-600, 625-725, and 765-805; these read PDPN…RSKA, SDTF…SELL, and VSRS…PGSV. Positions 626–654 are enriched in low complexity; that stretch reads DTFSSSPSSTPMGSMESLSSHSSEQNSCS. Positions 670-693 are enriched in polar residues; sequence LCWTTPSPSTNGPKSPACTTSPDS. Residues 694–704 are compositionally biased toward basic and acidic residues; sequence SSKEDANKTDG. Polar residues predominate over residues 710–721; the sequence is LSTSPGDRSSPA. Over residues 782-793 the composition is skewed to basic and acidic residues; that stretch reads PPKDGMRFRDDS.

In terms of biological role, may influence blood pressure by functioning as a GTPase-activating protein in vascular smooth muscle. This chain is Rho GTPase-activating protein 42, found in Danio rerio (Zebrafish).